The primary structure comprises 237 residues: Phosphoribosylaminoimidazole-succinocarboxamide synthase (237 aa).

The protein belongs to the SAICAR synthetase family.

It carries out the reaction 5-amino-1-(5-phospho-D-ribosyl)imidazole-4-carboxylate + L-aspartate + ATP = (2S)-2-[5-amino-1-(5-phospho-beta-D-ribosyl)imidazole-4-carboxamido]succinate + ADP + phosphate + 2 H(+). It functions in the pathway purine metabolism; IMP biosynthesis via de novo pathway; 5-amino-1-(5-phospho-D-ribosyl)imidazole-4-carboxamide from 5-amino-1-(5-phospho-D-ribosyl)imidazole-4-carboxylate: step 1/2. In Enterobacter sp. (strain 638), this protein is Phosphoribosylaminoimidazole-succinocarboxamide synthase.